The sequence spans 569 residues: Beta-lactamase-like protein 4 (569 aa).

The signal sequence occupies residues 1–19 (MKYYLYLFLLFTFANLLYS). N-linked (GlcNAc...) asparagine glycosylation is found at Asn-87, Asn-172, Asn-239, Asn-240, Asn-250, Asn-299, Asn-343, Asn-412, Asn-419, Asn-436, Asn-468, Asn-509, and Asn-535.

Belongs to the beta-lactamase family.

The protein localises to the secreted. The polypeptide is Beta-lactamase-like protein 4 (Dictyostelium discoideum (Social amoeba)).